A 352-amino-acid polypeptide reads, in one-letter code: MNTLLMHCRPGFEGEVCAEIAEHAATLEIPGYARSKPASAHVEFVCQDVDGAERLMRRLRFAELIFPRQWARGPGFIELPESQRIEVLLEELASYPVCGSLWLEVLDTNAGKEVSTFCRKFEKPLRAALVKAGRLQEDLALPRLLLTFRSGREVFVGLAEPRNSALWPMGIPRLKFPREAPSRSTLKLEEAWHQFIPRQEWDKRLAPDMLAVDLGAAPGGWTWQLVNREMRVTAVDNGPMAENLMYSGLVDHQKVDGYQYRPRQRVDWMVCDIVEKPARTGALIETWIGEGLCREAVVNLKLPMKQRYAEVRKILQRLRESFDARGLKVAFGCKQLYHDREEVTCHLRRLER.

S-adenosyl-L-methionine is bound by residues serine 184, alanine 217–glycine 220, aspartate 236, aspartate 256, and aspartate 272. Catalysis depends on lysine 301, which acts as the Proton acceptor.

The protein belongs to the class I-like SAM-binding methyltransferase superfamily. RNA methyltransferase RlmE family. RlmM subfamily. Monomer.

The protein localises to the cytoplasm. The catalysed reaction is cytidine(2498) in 23S rRNA + S-adenosyl-L-methionine = 2'-O-methylcytidine(2498) in 23S rRNA + S-adenosyl-L-homocysteine + H(+). Its function is as follows. Catalyzes the 2'-O-methylation at nucleotide C2498 in 23S rRNA. The sequence is that of Ribosomal RNA large subunit methyltransferase M from Pseudomonas paraeruginosa (strain DSM 24068 / PA7) (Pseudomonas aeruginosa (strain PA7)).